The following is a 310-amino-acid chain: tRNA dimethylallyltransferase (310 aa).

Residue 10–17 (GPTAVGKS) participates in ATP binding. 12-17 (TAVGKS) is a substrate binding site. The tract at residues 35-38 (DSMQ) is interaction with substrate tRNA.

The protein belongs to the IPP transferase family. As to quaternary structure, monomer. The cofactor is Mg(2+).

The catalysed reaction is adenosine(37) in tRNA + dimethylallyl diphosphate = N(6)-dimethylallyladenosine(37) in tRNA + diphosphate. Catalyzes the transfer of a dimethylallyl group onto the adenine at position 37 in tRNAs that read codons beginning with uridine, leading to the formation of N6-(dimethylallyl)adenosine (i(6)A). This chain is tRNA dimethylallyltransferase, found in Clostridium perfringens (strain 13 / Type A).